We begin with the raw amino-acid sequence, 370 residues long: Aspartate-semialdehyde dehydrogenase (370 aa).

NADP(+)-binding positions include 10 to 13 (RGMV), 37 to 38 (TS), and Q73. R102 contacts phosphate. C135 serves as the catalytic Acyl-thioester intermediate. Substrate is bound at residue Q162. NADP(+)-binding positions include 165–166 (SG) and P193. E241 contacts substrate. Phosphate is bound at residue K244. Residue R268 participates in substrate binding. The active-site Proton acceptor is the H275. Position 351 (Q351) interacts with NADP(+).

It belongs to the aspartate-semialdehyde dehydrogenase family. Homodimer.

It carries out the reaction L-aspartate 4-semialdehyde + phosphate + NADP(+) = 4-phospho-L-aspartate + NADPH + H(+). The protein operates within amino-acid biosynthesis; L-lysine biosynthesis via DAP pathway; (S)-tetrahydrodipicolinate from L-aspartate: step 2/4. It participates in amino-acid biosynthesis; L-methionine biosynthesis via de novo pathway; L-homoserine from L-aspartate: step 2/3. It functions in the pathway amino-acid biosynthesis; L-threonine biosynthesis; L-threonine from L-aspartate: step 2/5. In terms of biological role, catalyzes the NADPH-dependent formation of L-aspartate-semialdehyde (L-ASA) by the reductive dephosphorylation of L-aspartyl-4-phosphate. The polypeptide is Aspartate-semialdehyde dehydrogenase (asd) (Pseudomonas aeruginosa (strain ATCC 15692 / DSM 22644 / CIP 104116 / JCM 14847 / LMG 12228 / 1C / PRS 101 / PAO1)).